Reading from the N-terminus, the 804-residue chain is DEP domain-containing protein 1A (804 aa).

The 85-residue stretch at 24–108 (FRVGMPLRKH…DNNQLFRFPA (85 aa)) folds into the DEP domain. In terms of domain architecture, Rho-GAP spans 282–322 (DYFLNLPEPLLTFEYYELFVNILVVCGYITVSDRTSGIHKI). Ser513 is modified (phosphoserine). Positions 592 to 647 (AINALQLCCLLLPPPNRRKLQLLMRMISRMSQNVDMPKLHEQIGTRSLMINTFSRC) are interaction with ZNF224. Residues 726–760 (EQKISTSQAAIAELLENIVRSKSLSLKEKRRKLKQ) adopt a coiled-coil conformation.

As to quaternary structure, can form dimers. Interacts with ZNF224.

Its subcellular location is the nucleus. In terms of biological role, may be involved in transcriptional regulation as a transcriptional corepressor. The DEPDC1A-ZNF224 complex may play a critical role in bladder carcinogenesis by repressing the transcription of the A20 gene, leading to transport of NF-KB protein into the nucleus, resulting in suppression of apoptosis of bladder cancer cells. The polypeptide is DEP domain-containing protein 1A (Depdc1a) (Mus musculus (Mouse)).